The sequence spans 528 residues: MSKVWVGGFLCVYGEEPSEECLALPRDTVQKELRSGNIPLPLNINHNEKATIGMVRGLFDLEHGLFCVAQIQSQTFMDIIRNIASKSKLIAAGSVIEPLPPDPEIECLSSSFPGLSLSSKVLQDENLDGKPFFHHVSVCGVGRRPGTIAIFGREISWILDRFSCISESEKRQVLEGVNVYSQGFDENLFSADLYDLLADSLDTSYIRKRFPKLQLDKQLCGLSKCTYIKASEPPVEIIVATGKVAGDQVQLTTEPGSELAVETCDVSVVHGNYDAVESATATTAMSNQNLPNTTPLLSSPPFSDCVFLPKDAFFSLLNVTTGQQPKVVPPVSVHPPVTEQYQMLPYSESAAKIAEQESNRYHSPCQTMYPYWQYSPVPQYPAVLHGYRQPKTFKKRHFQSDSEDELSFPGDPEYTKKRRRHKVDNDDDKEMAREKNDLRELVDMIGMLRQEINALKHVRAQSPQRHVVPMETLPTIEEKGAASPKPSILNASLTPETVNRSLAGQNESMDLLKLNKKLFVDALNKMDS.

Active-site charge relay system residues include H46, S116, and H135. The tract at residues 270–288 (HGNYDAVESATATTAMSNQ) is interaction with pAP. Positions 394–432 (KKRHFQSDSEDELSFPGDPEYTKKRRRHKVDNDDDKEMA) are disordered. Residues 416-422 (KKRRRHK) carry the Nuclear localization signal motif. The tract at residues 508 to 528 (SMDLLKLNKKLFVDALNKMDS) is interaction with major capsid protein.

The protein belongs to the herpesviridae capsid scaffolding protein family. Homomultimer. Interacts with major capsid protein. As to quaternary structure, exists in a monomer-dimer equilibrium with the dimer being the active species. Post-translationally, capsid scaffolding protein is cleaved by assemblin after formation of the spherical procapsid. As a result, the capsid obtains its mature, icosahedral shape. Cleavages occur at two or more sites: release (R-site) and maturation (M-site).

It localises to the host cytoplasm. It is found in the host nucleus. The enzyme catalyses Cleaves -Ala-|-Ser- and -Ala-|-Ala- bonds in the scaffold protein.. Acts as a scaffold protein by binding major capsid protein in the cytoplasm, inducing the nuclear localization of both proteins. Multimerizes in the nucleus such as major capsid protein forms the icosahedral T=16 capsid. Autocatalytic cleavage releases the assembly protein, and subsequently abolishes interaction with major capsid protein. Cleavages products are evicted from the capsid before or during DNA packaging. Functionally, protease that plays an essential role in virion assembly within the nucleus. Catalyzes the cleavage of the assembly protein after formation of the spherical procapsid. By that cleavage, the capsid matures and gains its icosahedral shape. The cleavage sites seem to include -Ala-Ser-, -Ala-Ala-, as well as Ala-Thr bonds. Assemblin and cleavages products are evicted from the capsid before or during DNA packaging. Its function is as follows. Plays a major role in capsid assembly. Acts as a scaffold protein by binding major capsid protein. Multimerizes in the nucleus such as major capsid protein forms the icosahedral T=16 capsid. Cleaved by assemblin after capsid completion. The cleavages products are evicted from the capsid before or during DNA packaging. This chain is Capsid scaffolding protein (U53), found in Homo sapiens (Human).